The following is a 501-amino-acid chain: NAD(P)H-quinone oxidoreductase chain 4, chloroplastic (501 aa).

14 consecutive transmembrane segments (helical) span residues 5-25 (FPWL…IFFL), 38-58 (ICIC…HFQL), 85-105 (GLSI…TLAA), 112-130 (SRLF…IGSF), 135-155 (LLLF…LLAM), 168-188 (FILY…GIGL), 209-229 (ALEI…LPII), 243-263 (HYST…YGLV), 275-295 (SIFS…AALT), 306-326 (IAYS…SITD), 331-351 (GAIL…FLAG), 387-407 (LALP…GIIT), 417-437 (ILIT…LLSM), and 463-483 (LFVS…PDFV).

The protein belongs to the complex I subunit 4 family.

The protein resides in the plastid. It localises to the chloroplast thylakoid membrane. It carries out the reaction a plastoquinone + NADH + (n+1) H(+)(in) = a plastoquinol + NAD(+) + n H(+)(out). It catalyses the reaction a plastoquinone + NADPH + (n+1) H(+)(in) = a plastoquinol + NADP(+) + n H(+)(out). In Eucalyptus globulus subsp. globulus (Tasmanian blue gum), this protein is NAD(P)H-quinone oxidoreductase chain 4, chloroplastic.